Here is a 376-residue protein sequence, read N- to C-terminus: MSIRLTNISKKFGQFQALSPLNLDIQEGEMIGLLGPSGSGKTTLLRIIAGLEGADSGHIHFGNRDVTQVHVRDRRVGFVFQNYALFRHMTVADNVAFGLEVIPKKQRPSAAEIQKRVSHLLEMVQLGHLAQRYPEQLSGGQKQRIALARALATQPEVLLLDEPFGALDAKVRKELRRWLRSLHDELKFTSVFVTHDQDEALELSDRVVVMSNGNIEQVNTPIELYAQPNSRFVFDFLGNVNRFEANWQQNRWTNGDAFIVPPEQTPLQQNGALYVRSHELALADKPNSQAHIPFTIVAITPIGAEVRVELAPIGWQSEELWEAKFTHHHLQELGLQKGSVVYATPRTGYFFGKQGDGSPIRQSWPFLPPGSLAFDI.

Residues 3–237 (IRLTNISKKF…PNSRFVFDFL (235 aa)) enclose the ABC transporter domain. Residue 35 to 42 (GPSGSGKT) coordinates ATP.

It belongs to the ABC transporter superfamily. Sulfate/tungstate importer (TC 3.A.1.6) family. As to quaternary structure, the complex is composed of two ATP-binding proteins (CysA), two transmembrane proteins (CysT and CysW) and a solute-binding protein (CysP).

It localises to the cell inner membrane. It carries out the reaction sulfate(out) + ATP + H2O = sulfate(in) + ADP + phosphate + H(+). The catalysed reaction is thiosulfate(out) + ATP + H2O = thiosulfate(in) + ADP + phosphate + H(+). Its function is as follows. Part of the ABC transporter complex CysAWTP involved in sulfate/thiosulfate import. Responsible for energy coupling to the transport system. This is Sulfate/thiosulfate import ATP-binding protein CysA 1 from Shewanella oneidensis (strain ATCC 700550 / JCM 31522 / CIP 106686 / LMG 19005 / NCIMB 14063 / MR-1).